Here is a 273-residue protein sequence, read N- to C-terminus: Manganese catalase (273 aa).

Residue Glu-35 participates in Mn(2+) binding. Ca(2+) is bound by residues Asp-57 and Asp-61. Residues Glu-66, His-69, Glu-149, and His-182 each coordinate Mn(2+). Residues Asn-220, Ser-222, and Gly-224 each coordinate Ca(2+). The segment at 254-273 (EKPELKPAPPFVHNTLPGRE) is disordered.

The protein belongs to the manganese catalase family. It depends on Ca(2+) as a cofactor. Mn(2+) is required as a cofactor.

It catalyses the reaction 2 H2O2 = O2 + 2 H2O. Functionally, catalyzes the decomposition of hydrogen peroxide into water and oxygen. The polypeptide is Manganese catalase (ydbD) (Bacillus subtilis (strain 168)).